A 198-amino-acid chain; its full sequence is Dephospho-CoA kinase (198 aa).

Residues 3-198 (LIGLTGGIAS…VDALWAGLRG (196 aa)) form the DPCK domain. An ATP-binding site is contributed by 11–16 (ASGKST).

This sequence belongs to the CoaE family.

The protein localises to the cytoplasm. The catalysed reaction is 3'-dephospho-CoA + ATP = ADP + CoA + H(+). Its pathway is cofactor biosynthesis; coenzyme A biosynthesis; CoA from (R)-pantothenate: step 5/5. Its function is as follows. Catalyzes the phosphorylation of the 3'-hydroxyl group of dephosphocoenzyme A to form coenzyme A. The protein is Dephospho-CoA kinase of Leifsonia xyli subsp. xyli (strain CTCB07).